The sequence spans 52 residues: Large ribosomal subunit protein bL33 (52 aa).

The protein belongs to the bacterial ribosomal protein bL33 family.

This Chlamydia trachomatis serovar L2 (strain ATCC VR-902B / DSM 19102 / 434/Bu) protein is Large ribosomal subunit protein bL33.